An 89-amino-acid chain; its full sequence is Large ribosomal subunit protein bL27 (89 aa).

Residues Met1 to Arg20 are disordered.

It belongs to the bacterial ribosomal protein bL27 family.

This is Large ribosomal subunit protein bL27 from Rhodopseudomonas palustris (strain HaA2).